Consider the following 504-residue polypeptide: DnaJ homolog subfamily C member 3 (504 aa).

The signal sequence occupies residues 1 to 31 (MVAPGSVRSRLGAVFPFLLVLVDLQYEGAEC). TPR repeat units lie at residues 37-70 (VEKH…DPDN), 72-104 (IAYY…KMDF), 105-138 (TAAR…NPSE), 154-187 (MQRL…CVWD), 188-221 (AELR…KNDN), 222-255 (TEAF…DQDH), 268-301 (LNKL…EPSV), 306-339 (VRSK…EPDN), and 340-373 (VNAL…NEND). An intrachain disulfide couples cysteine 248 to cysteine 258. A Phosphoserine modification is found at serine 274. Cysteine 313 and cysteine 329 are disulfide-bonded. Positions 375–393 (QIREGLEKAQRLLKQSQKR) are flexible linker. The 69-residue stretch at 394-462 (DYYKILGVKR…EMRRKFDDGE (69 aa)) folds into the J domain. Positions 451-481 (DPEMRRKFDDGEDPLDAETQQGGGSNPFHRS) are disordered. Serine 475 carries the phosphoserine modification.

Interacts with EIF2AK2 and EIF2AK3. Forms a trimeric complex with DNAJB1 and HSPA8. Interacts with THAP12.

It localises to the endoplasmic reticulum. In terms of biological role, involved in the unfolded protein response (UPR) during ER stress. Co-chaperone of HSPA8/HSC70, it stimulates its ATPase activity. May inhibit both the autophosphorylation of EIF2AK2/PKR and the ability of EIF2AK2 to catalyze phosphorylation of the EIF2A. May inhibit EIF2AK3/PERK activity. The polypeptide is DnaJ homolog subfamily C member 3 (Dnajc3) (Rattus norvegicus (Rat)).